The primary structure comprises 385 residues: Suppressor protein STP22 of temperature-sensitive alpha-factor receptor and arginine permease (385 aa).

The region spanning Ala-12–Pro-161 is the UEV domain. A disordered region spans residues Pro-155 to Thr-219. Residues Asn-168–Thr-177 are compositionally biased toward polar residues. Over residues Pro-178 to Pro-201 the composition is skewed to pro residues. Positions Leu-272–Val-300 form a coiled coil. Residues Thr-322–Ser-385 enclose the SB domain.

The protein belongs to the ubiquitin-conjugating enzyme family. UEV subfamily. In terms of assembly, component of the ESCRT-I complex (endosomal sorting complex required for transport I) which consists of STP22, VPS28, SRN2 and MVB12 in a 1:1:1:1 stoichiometry. Interacts with HSE1 and VPS27. Interacts with MVB12 and SRN2.

The protein resides in the cytoplasm. It localises to the endosome. The protein localises to the late endosome membrane. Component of the ESCRT-I complex, a regulator of vesicular trafficking process. Binds to ubiquitinated cargo proteins and is required for the sorting of endocytic ubiquitinated cargos into multivesicular bodies (MVBs). Mediates the association to the ESCRT-0 complex. Required for vacuolar targeting of temperature-sensitive plasma membrane proteins STE2 and CAN1. This Saccharomyces cerevisiae (strain ATCC 204508 / S288c) (Baker's yeast) protein is Suppressor protein STP22 of temperature-sensitive alpha-factor receptor and arginine permease (STP22).